A 485-amino-acid chain; its full sequence is Cysteine protease atg4da (485 aa).

A disordered region spans residues 22 to 46; the sequence is ASASSKRHLGHGAVPDGIREGSGEP. Cysteine 131 serves as the catalytic Nucleophile. Residues aspartate 368 and histidine 370 contribute to the active site.

This sequence belongs to the peptidase C54 family.

Its subcellular location is the cytoplasm. It catalyses the reaction [protein]-C-terminal L-amino acid-glycyl-phosphatidylethanolamide + H2O = [protein]-C-terminal L-amino acid-glycine + a 1,2-diacyl-sn-glycero-3-phosphoethanolamine. The enzyme catalyses [protein]-C-terminal L-amino acid-glycyl-phosphatidylserine + H2O = [protein]-C-terminal L-amino acid-glycine + a 1,2-diacyl-sn-glycero-3-phospho-L-serine. Functionally, cysteine protease that plays a key role in autophagy by mediating both proteolytic activation and delipidation of ATG8 family proteins. The protease activity is required for proteolytic activation of ATG8 family proteins to reveal a C-terminal glycine. Exposure of the glycine at the C-terminus is essential for ATG8 proteins conjugation to phosphatidylethanolamine (PE) and insertion to membranes, which is necessary for autophagy. In addition to the protease activity, also mediates delipidation of ATG8 family proteins. Catalyzes delipidation of PE-conjugated forms of ATG8 proteins during macroautophagy. Also involved in non-canonical autophagy, a parallel pathway involving conjugation of ATG8 proteins to single membranes at endolysosomal compartments, by catalyzing delipidation of ATG8 proteins conjugated to phosphatidylserine (PS). ATG4D plays a role in the autophagy-mediated neuronal homeostasis in the central nervous system. The protein is Cysteine protease atg4da of Danio rerio (Zebrafish).